The following is a 392-amino-acid chain: Heat-inducible transcription repressor HrcA (392 aa).

This sequence belongs to the HrcA family.

Its function is as follows. Negative regulator of class I heat shock genes (grpE-dnaK-dnaJ and groELS operons). Prevents heat-shock induction of these operons. This is Heat-inducible transcription repressor HrcA from Chlamydia trachomatis serovar L2 (strain ATCC VR-902B / DSM 19102 / 434/Bu).